We begin with the raw amino-acid sequence, 388 residues long: Processive diacylglycerol beta-glucosyltransferase (388 aa).

This sequence belongs to the glycosyltransferase 28 family. UgtP subfamily.

Its subcellular location is the cell membrane. The enzyme catalyses a 1,2-diacyl-3-O-(beta-D-glucopyranosyl)-sn-glycerol + UDP-alpha-D-glucose = a 1,2-diacyl-3-O-(beta-D-Glc-(1-&gt;6)-beta-D-Glc)-sn-glycerol + UDP + H(+). It carries out the reaction a 1,2-diacyl-3-O-(beta-D-Glc-(1-&gt;6)-beta-D-Glc)-sn-glycerol + UDP-alpha-D-glucose = a 1,2-diacyl-3-O-(beta-D-Glc-(1-&gt;6)-beta-D-Glc-(1-&gt;6)-beta-D-Glc)-sn-glycerol + UDP + H(+). The catalysed reaction is a 1,2-diacyl-sn-glycerol + UDP-alpha-D-glucose = a 1,2-diacyl-3-O-(beta-D-glucopyranosyl)-sn-glycerol + UDP + H(+). The protein operates within glycolipid metabolism; diglucosyl-diacylglycerol biosynthesis. Functionally, processive glucosyltransferase involved in the biosynthesis of both the bilayer- and non-bilayer-forming membrane glucolipids. Is able to successively transfer up to three glucosyl residues to diacylglycerol (DAG), thereby catalyzing the formation of beta-monoglucosyl-DAG (3-O-(beta-D-glucopyranosyl)-1,2-diacyl-sn-glycerol), beta-diglucosyl-DAG (3-O-(beta-D-glucopyranosyl-beta-(1-&gt;6)-D-glucopyranosyl)-1,2-diacyl-sn-glycerol) and beta-triglucosyl-DAG (3-O-(beta-D-glucopyranosyl-beta-(1-&gt;6)-D-glucopyranosyl-beta-(1-&gt;6)-D-glucopyranosyl)-1,2-diacyl-sn-glycerol). Beta-diglucosyl-DAG is the predominant glycolipid found in Bacillales and is also used as a membrane anchor for lipoteichoic acid (LTA). In Bacillus thuringiensis (strain Al Hakam), this protein is Processive diacylglycerol beta-glucosyltransferase.